Here is a 333-residue protein sequence, read N- to C-terminus: Fibronectin type III domain-containing protein 11 (333 aa).

The region spanning 212–310 is the Fibronectin type-III domain; sequence PVMFDRKESV…DSLTLHTRPG (99 aa). The tract at residues 307–333 is disordered; that stretch reads TRPGPPEGLAPSRLGKLGLSLTTPSER.

The sequence is that of Fibronectin type III domain-containing protein 11 from Bos taurus (Bovine).